The chain runs to 540 residues: Phosphoenolpyruvate carboxykinase (ATP) (540 aa).

Residues Arg-67, Tyr-207, and Lys-213 each contribute to the substrate site. ATP is bound by residues Lys-213, His-232, and 248–256 (GLSGTGKTT). Mn(2+) contacts are provided by Lys-213 and His-232. Asp-269 provides a ligand contact to Mn(2+). ATP-binding positions include Glu-297, Arg-333, 449-450 (RI), and Thr-455. Arg-333 serves as a coordination point for substrate.

The protein belongs to the phosphoenolpyruvate carboxykinase (ATP) family. As to quaternary structure, monomer. It depends on Mn(2+) as a cofactor.

The protein resides in the cytoplasm. The enzyme catalyses oxaloacetate + ATP = phosphoenolpyruvate + ADP + CO2. The protein operates within carbohydrate biosynthesis; gluconeogenesis. Its function is as follows. Involved in the gluconeogenesis. Catalyzes the conversion of oxaloacetate (OAA) to phosphoenolpyruvate (PEP) through direct phosphoryl transfer between the nucleoside triphosphate and OAA. The sequence is that of Phosphoenolpyruvate carboxykinase (ATP) from Aliivibrio fischeri (strain MJ11) (Vibrio fischeri).